The primary structure comprises 634 residues: MTVDTDKQTLGFQTEVKQLLQLMIHSLYSNKEIFLRELVSNAADAADKLRFEALVKPELLEGSGELRIRVDFDKEARTVTIDDNGIGMSREDAVSHLGTIAKSGTADFLKHLSGDQKKDANLIGQFGVGFYSAFIVADQVDVYSRRAGLPASDGVHWSSRGEGEFEVASVDKPERGTRIVLHLKDGEDSFADGWTLRNILKKYSDHIGLPIEMRKEHYGEDADKPAEPEWEVVNRASALWTRPKSEIKDEEYQEFYKHVAHDAGNPLAWSHNKVEGKLDYTSLLFVPGRAPFDLYHRDSAKGLKLYVQRVFIMDQAEQFLPLYLRFIKGVVDSADLSLNVSREILQSGPVVDSMKSALTKRALDMLEKLAKDKPDDYATFWRNFGQALKEGPAEDYANREKVAGLLRFSSTHDTTGAQSVALADYVGRMTEGQDKLYYLTGESYAQIKDSPHLEVFRKKGIEVLLLTDRIDEWLMSYLTEFDSKSFVDVARGDLDLGKLDSEEDKKAQEEVAKSKEGLASRIKAALGDDVAEVRVSHRLTDSPAILAIGQGDLGLQMRQLLEASGQAVPETKPVFEFNPAHPLIEKLDAEQDMDRFGDLSRVLFDQAALAAGDSLKDPAGYVRRLNKLLLELSA.

The interval 1–342 (MTVDTDKQTL…SADLSLNVSR (342 aa)) is a; substrate-binding. The segment at 343–559 (EILQSGPVVD…QGDLGLQMRQ (217 aa)) is b. The c stretch occupies residues 560–634 (LLEASGQAVP…LNKLLLELSA (75 aa)).

The protein belongs to the heat shock protein 90 family. As to quaternary structure, homodimer.

The protein resides in the cytoplasm. Molecular chaperone. Has ATPase activity. This is Chaperone protein HtpG from Xanthomonas campestris pv. campestris (strain ATCC 33913 / DSM 3586 / NCPPB 528 / LMG 568 / P 25).